The primary structure comprises 364 residues: tRNA/tmRNA (uracil-C(5))-methyltransferase (364 aa).

S-adenosyl-L-methionine contacts are provided by Q189, Y216, N221, E237, and D297. Catalysis depends on C322, which acts as the Nucleophile. The active-site Proton acceptor is E356.

The protein belongs to the class I-like SAM-binding methyltransferase superfamily. RNA M5U methyltransferase family. TrmA subfamily.

It carries out the reaction uridine(54) in tRNA + S-adenosyl-L-methionine = 5-methyluridine(54) in tRNA + S-adenosyl-L-homocysteine + H(+). It catalyses the reaction uridine(341) in tmRNA + S-adenosyl-L-methionine = 5-methyluridine(341) in tmRNA + S-adenosyl-L-homocysteine + H(+). Functionally, dual-specificity methyltransferase that catalyzes the formation of 5-methyluridine at position 54 (m5U54) in all tRNAs, and that of position 341 (m5U341) in tmRNA (transfer-mRNA). The protein is tRNA/tmRNA (uracil-C(5))-methyltransferase of Campylobacter curvus (strain 525.92).